The following is a 532-amino-acid chain: NMDA receptor synaptonuclear signaling and neuronal migration factor (532 aa).

Residue Gly2 is the site of N-myristoyl glycine attachment. Residues 2-235 (GAAASRRRAL…FSFQTATTTM (234 aa)) form a necessary and sufficient to elicit dendritic processes and synaptic contacts region. 2 disordered regions span residues 34 to 67 (SQSH…APHN) and 127 to 174 (RRQR…GCAK). A compositionally biased stretch (basic and acidic residues) spans 38–48 (PENRNGADHLL). Residues 127-139 (RRQRERHPHHHSQ) show a composition bias toward basic residues. Residues 155–164 (PCQSWAGSRQ) are compositionally biased toward polar residues. The residue at position 206 (Ser206) is a Phosphoserine. Positions 247 to 252 (RKRRKR) match the Nuclear localization signal motif. A disordered region spans residues 275 to 315 (RVKAQTFAERRERSFSRSWSDPTPMKADTSHDSRDSSDLQS). A phosphoserine mark is found at Ser292 and Ser294. Residues 302-311 (DTSHDSRDSS) are compositionally biased toward basic and acidic residues.

This sequence belongs to the NSMF family. Interacts with KPNA1; the interaction occurs in a calcium-independent manner after synaptic NMDA receptor stimulation and is required for nuclear import of NSMF but is competed by CABP1. Interacts (via the central NLS-containing motif region) with CABP1 (via EF-hands 1 and 2); the interaction occurs in a calcium-dependent manner after synaptic NMDA receptor stimulation and prevents the nuclear import of NSMF. Cannot be competed by calmodulin. Proteolytically processed after NMDA receptor activation. Cleaved in a calcium-dependent and calpain-sensitive manner. Calpain cleavage is essential for the translocation process from dendrites to the nucleus. As to expression, expressed in the radiatum and pyramidale strata of the hippocampus (at protein level). Strongly expressed in the brain. Expressed in the sensory and motor cortex, hippocampus, olfactory bulb, thalamus and amygdala. In the olfactory bulb expressed in the granular cell layer, mitral cell layer and the glomerular layer. In the hippocampus highly expressed in the regions associated with neuronal cell types as CA1, CA2, CA3 and granule cells of the dentate gyrus. All isoforms have been detected in the molecular layers of the hippocampus.

Its subcellular location is the nucleus. It is found in the nucleus envelope. It localises to the nucleus membrane. The protein resides in the nucleus matrix. The protein localises to the cytoplasm. Its subcellular location is the cell cortex. It is found in the cytoskeleton. It localises to the cell membrane. The protein resides in the cell projection. The protein localises to the dendrite. Its subcellular location is the synapse. It is found in the synaptosome. It localises to the postsynaptic density. The protein resides in the membrane. Couples NMDA-sensitive glutamate receptor signaling to the nucleus and triggers long-lasting changes in the cytoarchitecture of dendrites and spine synapse processes. Part of the cAMP response element-binding protein (CREB) shut-off signaling pathway. Stimulates outgrowth of olfactory axons and migration of gonadotropin-releasing hormone (GnRH) and luteinizing-hormone-releasing hormone (LHRH) neuronal cells. The polypeptide is NMDA receptor synaptonuclear signaling and neuronal migration factor (Nsmf) (Rattus norvegicus (Rat)).